The following is a 438-amino-acid chain: Anthranilate synthase component 1 (438 aa).

L-tryptophan-binding positions include Ser45 and 220–222 (PYL). 255 to 256 (GT) contributes to the chorismate binding site. Glu282 contacts Mg(2+). Chorismate-binding positions include Tyr370, Arg389, 405–407 (GAG), and Gly407. Residue Glu420 coordinates Mg(2+).

Belongs to the anthranilate synthase component I family. In terms of assembly, heterotetramer consisting of two non-identical subunits: a beta subunit (TrpG) and a large alpha subunit (TrpE). The cofactor is Mg(2+).

It catalyses the reaction chorismate + L-glutamine = anthranilate + pyruvate + L-glutamate + H(+). The protein operates within amino-acid biosynthesis; L-tryptophan biosynthesis; L-tryptophan from chorismate: step 1/5. Its activity is regulated as follows. Feedback inhibited by tryptophan. Its function is as follows. Part of a heterotetrameric complex that catalyzes the two-step biosynthesis of anthranilate, an intermediate in the biosynthesis of L-tryptophan. In the first step, the glutamine-binding beta subunit (TrpG) of anthranilate synthase (AS) provides the glutamine amidotransferase activity which generates ammonia as a substrate that, along with chorismate, is used in the second step, catalyzed by the large alpha subunit of AS (TrpE) to produce anthranilate. In the absence of TrpG, TrpE can synthesize anthranilate directly from chorismate and high concentrations of ammonia. In Aeropyrum pernix (strain ATCC 700893 / DSM 11879 / JCM 9820 / NBRC 100138 / K1), this protein is Anthranilate synthase component 1 (trpE).